We begin with the raw amino-acid sequence, 384 residues long: Anhydro-N-acetylmuramic acid kinase (384 aa).

12 to 19 contributes to the ATP binding site; sequence GTSLDGVD.

The protein belongs to the anhydro-N-acetylmuramic acid kinase family.

It catalyses the reaction 1,6-anhydro-N-acetyl-beta-muramate + ATP + H2O = N-acetyl-D-muramate 6-phosphate + ADP + H(+). It participates in amino-sugar metabolism; 1,6-anhydro-N-acetylmuramate degradation. The protein operates within cell wall biogenesis; peptidoglycan recycling. Functionally, catalyzes the specific phosphorylation of 1,6-anhydro-N-acetylmuramic acid (anhMurNAc) with the simultaneous cleavage of the 1,6-anhydro ring, generating MurNAc-6-P. Is required for the utilization of anhMurNAc either imported from the medium or derived from its own cell wall murein, and thus plays a role in cell wall recycling. This is Anhydro-N-acetylmuramic acid kinase from Cronobacter sakazakii (strain ATCC BAA-894) (Enterobacter sakazakii).